The following is a 457-amino-acid chain: Chromosomal replication initiator protein DnaA (457 aa).

The domain I, interacts with DnaA modulators stretch occupies residues 1–75 (MDAQLNNLWE…ALKIVTSRKF (75 aa)). The domain II stretch occupies residues 75 to 118 (FKIEFYLESDLEEEKENEEKQKEEKKENTNDVDGSIVVSDEMSA). The segment at 119–335 (TLNPKYTFQS…GALIRIIAYS (217 aa)) is domain III, AAA+ region. ATP contacts are provided by glycine 163, glycine 165, lysine 166, and threonine 167. Residues 336 to 457 (SLTNRDVSVD…NDITKKLTQK (122 aa)) form a domain IV, binds dsDNA region.

The protein belongs to the DnaA family. In terms of assembly, oligomerizes as a right-handed, spiral filament on DNA at oriC.

It localises to the cytoplasm. In terms of biological role, plays an essential role in the initiation and regulation of chromosomal replication. ATP-DnaA binds to the origin of replication (oriC) to initiate formation of the DNA replication initiation complex once per cell cycle. Binds the DnaA box (a 9 base pair repeat at the origin) and separates the double-stranded (ds)DNA. Forms a right-handed helical filament on oriC DNA; dsDNA binds to the exterior of the filament while single-stranded (ss)DNA is stabiized in the filament's interior. The ATP-DnaA-oriC complex binds and stabilizes one strand of the AT-rich DNA unwinding element (DUE), permitting loading of DNA polymerase. After initiation quickly degrades to an ADP-DnaA complex that is not apt for DNA replication. Binds acidic phospholipids. The chain is Chromosomal replication initiator protein DnaA from Clostridium perfringens (strain ATCC 13124 / DSM 756 / JCM 1290 / NCIMB 6125 / NCTC 8237 / Type A).